The chain runs to 897 residues: 3'-5' exonuclease DinG (897 aa).

Positions Val-8–Leu-161 constitute an Exonuclease domain. In terms of domain architecture, Helicase ATP-binding spans Ser-241–Arg-496. Ala-276–Ser-283 contacts ATP. Residues Asp-448 to His-451 carry the DEAH box motif. The Helicase C-terminal domain maps to Asn-703–Gln-893.

The protein belongs to the helicase family. DinG subfamily. Type 2 sub-subfamily.

In terms of biological role, 3'-5' exonuclease. The sequence is that of 3'-5' exonuclease DinG from Staphylococcus aureus (strain MSSA476).